Here is a 528-residue protein sequence, read N- to C-terminus: Sphingosine-1-phosphate lyase (528 aa).

Residues 13-35 traverse the membrane as a helical segment; sequence PAKLVLATAGITAASILAYQAIT. At K324 the chain carries N6-(pyridoxal phosphate)lysine.

It belongs to the group II decarboxylase family. Sphingosine-1-phosphate lyase subfamily. It depends on pyridoxal 5'-phosphate as a cofactor.

The protein localises to the endoplasmic reticulum membrane. The catalysed reaction is sphinganine 1-phosphate = hexadecanal + phosphoethanolamine. Its pathway is lipid metabolism; sphingolipid metabolism. In terms of biological role, cleaves phosphorylated sphingoid bases (PSBs), such as sphingosine-1-phosphate, into fatty aldehydes and phosphoethanolamine. Sphingosine-1-phosphate (S1P) probably acts intracellularly as a second messenger perhaps by promoting cell proliferation; the absence of S1P lyase increases its concentration. This leads to increased lateral pseudopod formation as well as defects in the efficiency of chemotaxis. Overexpression of S1P lyase causes decreased growth rates, entry into stationary phase at lower cell density and increased sensitivity to the antitumor agents cisplatin and carboplatin; these effects are more pronounced in cells that express more enzyme. In Dictyostelium discoideum (Social amoeba), this protein is Sphingosine-1-phosphate lyase (sglA).